We begin with the raw amino-acid sequence, 1074 residues long: DNA double-strand break repair Rad50 ATPase (1074 aa).

ATP is bound by residues Arg-12, 32–38, and Gln-142; that span reads NGSGKSS. 2 coiled-coil regions span residues 355–402 and 452–506; these read ELEK…REKA and NLVE…KGLG. One can recognise a Zinc-hook domain in the interval 512–611; the sequence is LENLEDFSEL…KITRLKDAKK (100 aa). Cys-559 and Cys-562 together coordinate Zn(2+). 4 coiled-coil regions span residues 574-611, 649-678, 749-823, and 865-895; these read TAEE…DAKK, LKLE…LQVQ, KEKL…EILE, and TEEK…LKAL. 973–978 serves as a coordination point for ATP; that stretch reads LLSGGE.

This sequence belongs to the SMC family. RAD50 subfamily. In terms of assembly, homodimer. Forms a heterotetramer composed of two Mre11 subunits and two Rad50 subunits. It depends on Zn(2+) as a cofactor.

In terms of biological role, part of the Rad50/Mre11 complex, which is involved in the early steps of DNA double-strand break (DSB) repair. The complex may facilitate opening of the processed DNA ends to aid in the recruitment of HerA and NurA. Rad50 controls the balance between DNA end bridging and DNA resection via ATP-dependent structural rearrangements of the Rad50/Mre11 complex. In Methanosarcina acetivorans (strain ATCC 35395 / DSM 2834 / JCM 12185 / C2A), this protein is DNA double-strand break repair Rad50 ATPase.